Reading from the N-terminus, the 388-residue chain is Diphosphomevalonate decarboxylase (388 aa).

Residues Y19–K22, R74, S153–R158, and T209 contribute to the (R)-5-diphosphomevalonate site. Residues Q367–N388 are disordered.

Belongs to the diphosphomevalonate decarboxylase family. As to quaternary structure, homodimer.

It catalyses the reaction (R)-5-diphosphomevalonate + ATP = isopentenyl diphosphate + ADP + phosphate + CO2. Its pathway is isoprenoid biosynthesis; isopentenyl diphosphate biosynthesis via mevalonate pathway; isopentenyl diphosphate from (R)-mevalonate: step 3/3. In terms of biological role, diphosphomevalonate decarboxylase; part of the second module of ergosterol biosynthesis pathway that includes the middle steps of the pathway. The second module is carried out in the vacuole and involves the formation of farnesyl diphosphate, which is also an important intermediate in the biosynthesis of ubiquinone, dolichol, heme and prenylated proteins. Activity by the mevalonate kinase ERG12 first converts mevalonate into 5-phosphomevalonate. 5-phosphomevalonate is then further converted to 5-diphosphomevalonate by the phosphomevalonate kinase ERG8. The diphosphomevalonate decarboxylase MVD1/ERG19 then produces isopentenyl diphosphate. The isopentenyl-diphosphate delta-isomerase IDI1 then catalyzes the 1,3-allylic rearrangement of the homoallylic substrate isopentenyl (IPP) to its highly electrophilic allylic isomer, dimethylallyl diphosphate (DMAPP). Finally the farnesyl diphosphate synthase ERG20 catalyzes the sequential condensation of isopentenyl pyrophosphate with dimethylallyl pyrophosphate, and then with the resultant geranylpyrophosphate to the ultimate product farnesyl pyrophosphate. This Debaryomyces hansenii (strain ATCC 36239 / CBS 767 / BCRC 21394 / JCM 1990 / NBRC 0083 / IGC 2968) (Yeast) protein is Diphosphomevalonate decarboxylase.